A 1161-amino-acid polypeptide reads, in one-letter code: Lethal(2) giant larvae protein (1161 aa).

Positions D15–Q86 are phospho-regulated basic and hydrophobic (PRBH) motif. WD repeat units lie at residues S39–Q72, E82–L128, V131–I167, S189–Y223, S231–P263, S278–V320, V328–L358, and T380–K464. 2 positions are modified to phosphoserine: S473 and S484. 2 WD repeats span residues K513 to L594 and T603 to S664. S679 is subject to Phosphoserine. WD repeat units follow at residues V708–Q778, G787–I832, L837–A927, and C941–T964. 6 positions are modified to phosphoserine: S808, S869, S876, S887, S889, and S893. Phosphoserine is present on S1013. The tract at residues E1141–F1161 is disordered.

It belongs to the WD repeat L(2)GL family. In terms of assembly, may form multimeric complexes. Interacts with mahj. Interacts with aPKC; leading to phosphorylation. Interacts with ball. Post-translationally, phosphorylated by aPKC which lowers lipid affinity and promotes dissociation from the cell cortex. In developing oocytes, aPKC-mediated phosphorylation restricts activity to the oocyte posterior and is required for oocyte polarity formation. In terms of tissue distribution, expressed in the epithelial cells of the digestive tract and in gonads.

It is found in the cytoplasm. The protein resides in the cell cortex. Functionally, essential for the development of polarized epithelia, for cell polarity associated with asymmetric cell division of neuroblasts during development, and for oocyte polarity formation. Promotes the formation of actin-rich projections at the oocyte cortex and the posterior enrichment of par-1 which is required for oocyte polarization. Regulates the localization of axis-specifying morphogens such as stau and grk. In terms of biological role, has an essential role in control of cell proliferation and differentiation during development and could act as a tumor suppressor. Has an accessory function in control of cell proliferation and differentiation during development. The sequence is that of Lethal(2) giant larvae protein (l(2)gl) from Drosophila melanogaster (Fruit fly).